Consider the following 306-residue polypeptide: N-acetylmuramic acid 6-phosphate etherase (306 aa).

Residues 55-218 (AAATLLAGGR…STGAMIKIGK (164 aa)) enclose the SIS domain. The active-site Proton donor is Glu-83. Glu-114 is an active-site residue.

Belongs to the GCKR-like family. MurNAc-6-P etherase subfamily. As to quaternary structure, homodimer.

The enzyme catalyses N-acetyl-D-muramate 6-phosphate + H2O = N-acetyl-D-glucosamine 6-phosphate + (R)-lactate. The protein operates within amino-sugar metabolism; 1,6-anhydro-N-acetylmuramate degradation. It participates in amino-sugar metabolism; N-acetylmuramate degradation. Its pathway is cell wall biogenesis; peptidoglycan recycling. In terms of biological role, specifically catalyzes the cleavage of the D-lactyl ether substituent of MurNAc 6-phosphate, producing GlcNAc 6-phosphate and D-lactate. Together with AnmK, is also required for the utilization of anhydro-N-acetylmuramic acid (anhMurNAc) either imported from the medium or derived from its own cell wall murein, and thus plays a role in cell wall recycling. This chain is N-acetylmuramic acid 6-phosphate etherase, found in Erwinia tasmaniensis (strain DSM 17950 / CFBP 7177 / CIP 109463 / NCPPB 4357 / Et1/99).